The chain runs to 156 residues: MMKGVIIDLQIVSEDQTNLPTPEQFTQWATAAVRAEALEPEITIRIVDEAESHDLNLTYRGKDRPTNVLSFPFECPEEVELPLLGDLVICRQVVEREAEQQGKPLPAHWAHMVVHGCLHLLGYDHIEDDEAVEMESLETQIMTELGFEDPYSYDEI.

Positions 115, 119, and 125 each coordinate Zn(2+).

The protein belongs to the endoribonuclease YbeY family. Zn(2+) is required as a cofactor.

The protein resides in the cytoplasm. In terms of biological role, single strand-specific metallo-endoribonuclease involved in late-stage 70S ribosome quality control and in maturation of the 3' terminus of the 16S rRNA. The polypeptide is Endoribonuclease YbeY (Actinobacillus succinogenes (strain ATCC 55618 / DSM 22257 / CCUG 43843 / 130Z)).